The primary structure comprises 350 residues: D-alanine--D-alanine ligase (350 aa).

Residues 133 to 334 (NDIFELNKIP…VSEVFDNLIG (202 aa)) form the ATP-grasp domain. Residue 161 to 216 (FEKTSKAVYVKPCNAGSSVGVMRAETEEELEKAIQNAFQYDRRILVEEEIIGPELQ) coordinates ATP. Mg(2+) contacts are provided by aspartate 288, glutamate 300, and asparagine 302.

The protein belongs to the D-alanine--D-alanine ligase family. The cofactor is Mg(2+). It depends on Mn(2+) as a cofactor.

The protein resides in the cytoplasm. The enzyme catalyses 2 D-alanine + ATP = D-alanyl-D-alanine + ADP + phosphate + H(+). Its pathway is cell wall biogenesis; peptidoglycan biosynthesis. Its function is as follows. Cell wall formation. The chain is D-alanine--D-alanine ligase from Finegoldia magna (strain ATCC 29328 / DSM 20472 / WAL 2508) (Peptostreptococcus magnus).